We begin with the raw amino-acid sequence, 155 residues long: Ribonuclease H (155 aa).

The RNase H type-1 domain occupies 5 to 146; the sequence is DQKPVIIHTD…ADQLARDGLT (142 aa). Asp14, Glu52, Asp74, and Asp138 together coordinate Mg(2+). A disordered region spans residues 133 to 155; sequence ENERADQLARDGLTENRMKSRVK.

This sequence belongs to the RNase H family. Monomer. Mg(2+) is required as a cofactor.

It is found in the cytoplasm. It carries out the reaction Endonucleolytic cleavage to 5'-phosphomonoester.. In terms of biological role, endonuclease that specifically degrades the RNA of RNA-DNA hybrids. In Rhodopseudomonas palustris (strain ATCC BAA-98 / CGA009), this protein is Ribonuclease H.